A 431-amino-acid polypeptide reads, in one-letter code: MDKLSIREDNYNIKHKTISLNRASSVTRNLKGLLKFLGPAFVVSVAYIDPGNFATNISGGSSFNYNLIWVILWSNLMAIFLQTMSAKLGIATGCSLPEMCAKVFSKRANWIFWIVGELGAMATDLAEFIGGTLGLYLLFRIPMIYAGLLTGVLTFIIVYMEKYGQKMVETIIAALIAVICVAYTIELFLARPAWTQVGMHTLIPSLPNGEAVLIAVGMLGATVMPHVIYLHSELVQHRNTNSSDKEKLHHLKMEKIDILIAMNIAFVVNAAMVIVSAAVFFKHGIKVSTIEEAHRSLQPLLGNLSSGAFGIALLASGLSSSAVGTMAGQTIMKGFVNLSIPINLRRIITMLPALIIIALGINPMRVLVLSQVALSFILPFPIIQMLLIAGRKDLMGILVNKKFTKIVGFIIATMIILLNIILLYLTFTGQT.

11 helical membrane passes run 33 to 53 (LLKFLGPAFVVSVAYIDPGNF), 61 to 81 (SSFNYNLIWVILWSNLMAIFL), 110 to 130 (WIFWIVGELGAMATDLAEFIG), 141 to 161 (IPMIYAGLLTGVLTFIIVYME), 170 to 190 (TIIAALIAVICVAYTIELFLA), 211 to 231 (AVLIAVGMLGATVMPHVIYLH), 258 to 278 (ILIAMNIAFVVNAAMVIVSAA), 307 to 327 (GAFGIALLASGLSSSAVGTMA), 347 to 367 (IITMLPALIIIALGINPMRVL), 368 to 388 (VLSQVALSFILPFPIIQMLLI), and 406 to 426 (IVGFIIATMIILLNIILLYLT).

Belongs to the NRAMP family.

It localises to the cell membrane. H(+)-stimulated, divalent metal cation uptake system. This is Divalent metal cation transporter MntH from Clostridium acetobutylicum (strain ATCC 824 / DSM 792 / JCM 1419 / IAM 19013 / LMG 5710 / NBRC 13948 / NRRL B-527 / VKM B-1787 / 2291 / W).